The primary structure comprises 161 residues: MSTLTHFNAKGEAHMVDVGDKSVTHRVAVAEGHITMEPETLALIRSGTHKKGDVLGIARVAGIMASKKTSELVPLCHPISLTHVEVELSTADSPPSVHCRVTAETRGQTGVEMEALTAVQVALLTVYDMCKAVDRFMTMGGVRLVHKSGGKSGTWDLKGSG.

Residues 75–77 and 113–114 each bind substrate; these read LCH and ME. D128 is a catalytic residue.

Belongs to the MoaC family. In terms of assembly, homohexamer; trimer of dimers.

The enzyme catalyses (8S)-3',8-cyclo-7,8-dihydroguanosine 5'-triphosphate = cyclic pyranopterin phosphate + diphosphate. Its pathway is cofactor biosynthesis; molybdopterin biosynthesis. Functionally, catalyzes the conversion of (8S)-3',8-cyclo-7,8-dihydroguanosine 5'-triphosphate to cyclic pyranopterin monophosphate (cPMP). The polypeptide is Cyclic pyranopterin monophosphate synthase (Thioalkalivibrio sulfidiphilus (strain HL-EbGR7)).